An 862-amino-acid polypeptide reads, in one-letter code: Dipeptidyl peptidase 9 (862 aa).

Catalysis depends on charge relay system residues Ser-729, Asp-807, and His-839. Position 729 (Ser-729) interacts with Val-boroPro.

This sequence belongs to the peptidase S9B family. DPPIV subfamily. In terms of assembly, homodimer. Forms a ternary complex with NLRP1, composed of a DPP9 homodimer, one full-length NLRP1 protein, and one cleaved C-terminus of NLRP1 (NACHT, LRR and PYD domains-containing protein 1, C-terminus). Forms a ternary complex with CARD8, composed of a DPP9 homodimer, one full-length NLRP1 protein, and one cleaved C-terminus of CARD8 (Caspase recruitment domain-containing protein 8, C-terminus). In the ternary complex, only one subunit of the DPP9 homodimer is bound to NLRP1 or CARD8. In terms of tissue distribution, detected in kidney, skin, brain, thymus and liver (at protein level).

The protein resides in the cytoplasm. It localises to the cytosol. It catalyses the reaction Release of an N-terminal dipeptide, Xaa-Yaa-|-Zaa-, from a polypeptide, preferentially when Yaa is Pro, provided Zaa is neither Pro nor hydroxyproline.. Inhibited by the serine proteinase inhibitor 4-(2-aminoethyl)benzenesulphonyl fluoride (AEBSF), and by di-isopropylfluorophosphate. Inhibited by Val-boroPro (Talabostat, PT-100), a non-selective inhibitor, which triggers pyroptosis in monocytes and macrophages. Val-boroPro inhibits activity by binding to the active site, mimicking a substrate-bound state, thereby displacing the C-terminal fragment of NLRP1, leading to activation of the NLRP1 inflammasome. In contrast, Val-boroPro does not directly displaces CARD8: it acts by promoting degradation of the N-terminal part of CARD8, leading to indirect disruption of the ternary complex. Its function is as follows. Dipeptidyl peptidase that cleaves off N-terminal dipeptides from proteins having a Pro or Ala residue at position 2. Acts as a key inhibitor of caspase-1-dependent monocyte and macrophage pyroptosis in resting cells by preventing activation of NLRP1 and CARD8. Sequesters the cleaved C-terminal part of NLRP1 and CARD8, which respectively constitute the active part of the NLRP1 and CARD8 inflammasomes, in a ternary complex, thereby preventing their oligomerization and activation. The dipeptidyl peptidase activity is required to suppress NLRP1 and CARD8; however, neither NLRP1 nor CARD8 are bona fide substrates of DPP9, suggesting the existence of substrate(s) required for NLRP1 and CARD8 inhibition. The chain is Dipeptidyl peptidase 9 from Mus musculus (Mouse).